We begin with the raw amino-acid sequence, 389 residues long: MRLLKNNIILRLLNSYMVDSPQPANLTYLWNFGSLLGICLVLQILTGCFLAMHFTPHAEMAFNSVEHIMRDVQSGWIVRYTHANVASFFFIFVYAHIGRGLYYNSYKSPRVLLWSIGVIILVLMMAIGFLGYVIPFGQMSLWGATVITNLLSAIPVFGQDIVELIWGGFSVSNATLNRFFSLHYILPFVLAALVVAHFMALHIHGSNNPNGVTSNTDRYPMYPYFIFKDLVTIFAFFWILSVIVFFYPNLMGHQDNYIPADPMVTPASIVPEWYLLPFYAILRSIPDKLLGVVAMFGSLLILLVLPLTDLSRIRGNQFRPAMKFFFWFFVVNFIMLFWLGSQHPNTPYLEIGQLSTTFYFSFFLVIVPFTGLVENTLLDLNIKELDLNL.

The next 4 membrane-spanning stretches (helical) occupy residues 32-52 (FGSL…FLAM), 76-98 (WIVR…AHIG), 113-133 (LWSI…LGYV), and 179-199 (FFSL…AHFM). Heme b-binding residues include H82 and H96. Heme b contacts are provided by H183 and H197. Position 202 (H202) interacts with a ubiquinone. 4 consecutive transmembrane segments (helical) span residues 225 to 245 (FIFK…VIVF), 289 to 309 (LLGV…PLTD), 321 to 341 (AMKF…WLGS), and 348 to 368 (YLEI…VIVP).

The protein belongs to the cytochrome b family. In terms of assembly, fungal cytochrome b-c1 complex contains 10 subunits; 3 respiratory subunits, 2 core proteins and 5 low-molecular weight proteins. Cytochrome b-c1 complex is a homodimer. It depends on heme b as a cofactor.

Its subcellular location is the mitochondrion inner membrane. Functionally, component of the ubiquinol-cytochrome c reductase complex (complex III or cytochrome b-c1 complex) that is part of the mitochondrial respiratory chain. The b-c1 complex mediates electron transfer from ubiquinol to cytochrome c. Contributes to the generation of a proton gradient across the mitochondrial membrane that is then used for ATP synthesis. The sequence is that of Cytochrome b (COB) from Strobilurus tenacellus.